The chain runs to 531 residues: T-complex protein 1 subunit zeta-2 (531 aa).

The protein belongs to the TCP-1 chaperonin family. In terms of assembly, component of the chaperonin-containing T-complex (TRiC), a heterooligomeric complex of about 850 to 900 kDa that forms two stacked rings, 12 to 16 nm in diameter.

Its subcellular location is the cytoplasm. Component of the chaperonin-containing T-complex (TRiC), a molecular chaperone complex that assists the folding of proteins upon ATP hydrolysis. In Bos taurus (Bovine), this protein is T-complex protein 1 subunit zeta-2 (CCT6B).